The sequence spans 340 residues: Guanine nucleotide-binding protein G(I)/G(S)/G(T) subunit beta-1 (340 aa).

WD repeat units lie at residues Gly53 to Asp83, Leu95 to Asn125, Gly141 to Asp170, Gly182 to Asp212, Gly224 to Asp254, Asn268 to Asp298, and Gly310 to Asn340.

Belongs to the WD repeat G protein beta family. G proteins are composed of 3 units, alpha, beta and gamma.

Guanine nucleotide-binding proteins (G proteins) are involved as a modulator or transducer in various transmembrane signaling systems. The beta and gamma chains are required for the GTPase activity, for replacement of GDP by GTP, and for G protein-effector interaction. The protein is Guanine nucleotide-binding protein G(I)/G(S)/G(T) subunit beta-1 (gnb1) of Xenopus laevis (African clawed frog).